Here is a 227-residue protein sequence, read N- to C-terminus: Large ribosomal subunit protein bL25 (227 aa).

Residues 1–22 (MAETKTLAAAARHGTGKGAARS) form a disordered region.

It belongs to the bacterial ribosomal protein bL25 family. CTC subfamily. In terms of assembly, part of the 50S ribosomal subunit; part of the 5S rRNA/L5/L18/L25 subcomplex. Contacts the 5S rRNA. Binds to the 5S rRNA independently of L5 and L18.

In terms of biological role, this is one of the proteins that binds to the 5S RNA in the ribosome where it forms part of the central protuberance. The sequence is that of Large ribosomal subunit protein bL25 from Methylocella silvestris (strain DSM 15510 / CIP 108128 / LMG 27833 / NCIMB 13906 / BL2).